Here is a 206-residue protein sequence, read N- to C-terminus: Ribosomal RNA small subunit methyltransferase G (206 aa).

S-adenosyl-L-methionine-binding positions include G74, L79, 125–126, and R140; that span reads VE.

The protein belongs to the methyltransferase superfamily. RNA methyltransferase RsmG family.

Its subcellular location is the cytoplasm. The catalysed reaction is guanosine(527) in 16S rRNA + S-adenosyl-L-methionine = N(7)-methylguanosine(527) in 16S rRNA + S-adenosyl-L-homocysteine. In terms of biological role, specifically methylates the N7 position of guanine in position 527 of 16S rRNA. This chain is Ribosomal RNA small subunit methyltransferase G, found in Shewanella sp. (strain ANA-3).